Here is a 336-residue protein sequence, read N- to C-terminus: Foldase protein PrsA (336 aa).

An N-terminal signal peptide occupies residues 1–22; sequence MKSAKKLLSVLCLGIFILTFTA. Cysteine 23 is lipidated: N-palmitoyl cysteine. Cysteine 23 carries the S-diacylglycerol cysteine lipid modification. Positions 194–286 constitute a PpiC domain; sequence PNTMNVSHIL…FGYHIIKINS (93 aa).

It belongs to the PrsA family.

It localises to the cell membrane. It carries out the reaction [protein]-peptidylproline (omega=180) = [protein]-peptidylproline (omega=0). Plays a major role in protein secretion by helping the post-translocational extracellular folding of several secreted proteins. This Clostridium botulinum (strain 657 / Type Ba4) protein is Foldase protein PrsA.